A 624-amino-acid chain; its full sequence is LRR receptor kinase BAK1 (624 aa).

The N-terminal stretch at 1–25 (MAAPRWAVWAVLLLRLLVPAARVLA) is a signal peptide. The Extracellular segment spans residues 26-237 (NMEGDALHSL…QSPGSSSSTG (212 aa)). 4 LRR repeats span residues 91 to 115 (LKNL…LGNL), 117 to 139 (NLVS…LGNL), 140 to 163 (LKLR…LTAI), and 164 to 188 (TALQ…SFSL). Asn103, Asn114, Asn127, Asn149, and Asn175 each carry an N-linked (GlcNAc...) asparagine glycan. The disordered stretch occupies residues 205–236 (TTKPCPGAPPFSPPPPYNPPTPVQSPGSSSST). Positions 210-227 (PGAPPFSPPPPYNPPTPV) are enriched in pro residues. Residues 238 to 258 (AIAGGVAAGAALLFAIPAIGF) traverse the membrane as a helical segment. The Cytoplasmic portion of the chain corresponds to 259–624 (AWYRRRKPQE…LHAVELSGPR (366 aa)). The 288-residue stretch at 301-588 (FSNKNILGRG…GLAERWEEWQ (288 aa)) folds into the Protein kinase domain. Residues 307–315 (LGRGGFGKV) and Lys329 each bind ATP. The active-site Proton acceptor is the Asp428.

Belongs to the protein kinase superfamily. Ser/Thr protein kinase family. As to quaternary structure, forms homodimers. Interacts with BRI1. Interacts with REM4.1.

It is found in the cell membrane. The catalysed reaction is L-seryl-[protein] + ATP = O-phospho-L-seryl-[protein] + ADP + H(+). It catalyses the reaction L-threonyl-[protein] + ATP = O-phospho-L-threonyl-[protein] + ADP + H(+). In terms of biological role, LRR receptor kinase involved in defense response. Does not seem to be required specifically for XA21-mediated immunity or basal resistance to Xanthomonas oryzae pv. oryzae (Xoo), or immunity to Magnaporthe oryzae. Involved in brassinosteroid (BR) signaling pathway. Acts as a coreceptor of BRI1. Forms at the plasma membrane a receptor complex with BRI1 which is activated in response to brassinolide. Phosphorylates BRI1. Required for normal plant growth and leaf development. Possesses kinase activity in vitro. The polypeptide is LRR receptor kinase BAK1 (Oryza sativa subsp. indica (Rice)).